Reading from the N-terminus, the 154-residue chain is Xanthine-guanine phosphoribosyltransferase (154 aa).

Residues 37–38 (RG), Arg-69, and 88–96 (EDLVDSGDT) contribute to the 5-phospho-alpha-D-ribose 1-diphosphate site. Arg-69 lines the GMP pocket. Asp-89 lines the Mg(2+) pocket. The guanine site is built by Asp-92 and Ile-135. Positions 92 and 135 each coordinate xanthine. GMP contacts are provided by residues 92–96 (DSGDT) and 134–135 (WI).

The protein belongs to the purine/pyrimidine phosphoribosyltransferase family. XGPT subfamily. As to quaternary structure, homotetramer. It depends on Mg(2+) as a cofactor.

The protein resides in the cell inner membrane. The enzyme catalyses GMP + diphosphate = guanine + 5-phospho-alpha-D-ribose 1-diphosphate. It catalyses the reaction XMP + diphosphate = xanthine + 5-phospho-alpha-D-ribose 1-diphosphate. It carries out the reaction IMP + diphosphate = hypoxanthine + 5-phospho-alpha-D-ribose 1-diphosphate. It functions in the pathway purine metabolism; GMP biosynthesis via salvage pathway; GMP from guanine: step 1/1. Its pathway is purine metabolism; XMP biosynthesis via salvage pathway; XMP from xanthine: step 1/1. Functionally, purine salvage pathway enzyme that catalyzes the transfer of the ribosyl-5-phosphate group from 5-phospho-alpha-D-ribose 1-diphosphate (PRPP) to the N9 position of the 6-oxopurines guanine and xanthine to form the corresponding ribonucleotides GMP (guanosine 5'-monophosphate) and XMP (xanthosine 5'-monophosphate), with the release of PPi. To a lesser extent, also acts on hypoxanthine. The chain is Xanthine-guanine phosphoribosyltransferase from Vibrio campbellii (strain ATCC BAA-1116).